A 274-amino-acid chain; its full sequence is Purine nucleoside phosphorylase 1 (274 aa).

Residues Ser-29, His-60, 80–82 (RFH), and Ala-112 contribute to the phosphate site. Ser-29 carries the phosphoserine modification. A purine D-ribonucleoside is bound at residue Glu-192. Ser-211 provides a ligand contact to phosphate. Asn-234 serves as a coordination point for a purine D-ribonucleoside.

This sequence belongs to the PNP/MTAP phosphorylase family. In terms of assembly, homotrimer.

It catalyses the reaction a purine D-ribonucleoside + phosphate = a purine nucleobase + alpha-D-ribose 1-phosphate. It carries out the reaction a purine 2'-deoxy-D-ribonucleoside + phosphate = a purine nucleobase + 2-deoxy-alpha-D-ribose 1-phosphate. The protein operates within purine metabolism; purine nucleoside salvage. Functionally, the purine nucleoside phosphorylases catalyze the phosphorolytic breakdown of the N-glycosidic bond in the beta-(deoxy)ribonucleoside molecules, with the formation of the corresponding free purine bases and pentose-1-phosphate. Cleaves guanosine, inosine, 2'-deoxyguanosine and 2'-deoxyinosine. The sequence is that of Purine nucleoside phosphorylase 1 (punA) from Geobacillus stearothermophilus (Bacillus stearothermophilus).